A 190-amino-acid chain; its full sequence is Small ribosomal subunit protein eS7 (190 aa).

Belongs to the eukaryotic ribosomal protein eS7 family.

In Manduca sexta (Tobacco hawkmoth), this protein is Small ribosomal subunit protein eS7 (RpS7).